The primary structure comprises 352 residues: Dead end protein homolog 1 (352 aa).

RRM domains follow at residues 58–136 (SEVY…RSTE) and 138–218 (CELT…WLKP). Arg-336 carries the post-translational modification Omega-N-methylarginine.

In terms of assembly, interacts with APOBEC3. In terms of tissue distribution, isoform 1 and isoform 2 are expressed in testis. Isoform 1 is expressed continuously in post natal (PN) testis although levels are low between PN1 to PN6. Isoform 2 is expressed from PN 20 onwards. Isoform 2 is strongly expressed in meiotic and in post-meiotic germ cells of the testis with highest expression at the elongated spermatid stage (at protein level). Expressed in testis and heart. Expressed in germ cells and genital ridges. Not detected in testicular tumors.

It is found in the nucleus. The protein resides in the cytoplasm. Functionally, RNA-binding factor that positively regulates gene expression by prohibiting miRNA-mediated gene suppression. Relieves miRNA repression in germline cells. Prohibits the function of several miRNAs by blocking the accessibility of target mRNAs. Sequence-specific RNA-binding factor that binds specifically to U-rich regions (URRs) in the 3' untranslated region (3'-UTR) of several mRNAs. Does not bind to miRNAs. Isoform 1 may play a role during primordial germ cell (PGC) survival. However, does not seem to be essential for PGC migration. The chain is Dead end protein homolog 1 (Dnd1) from Mus musculus (Mouse).